The following is a 114-amino-acid chain: Probable 4-amino-4-deoxy-L-arabinose-phosphoundecaprenol flippase subunit ArnE (114 aa).

3 consecutive transmembrane segments (helical) span residues Leu38–Leu58, Leu64–Ala84, and Leu94–Leu114. One can recognise an EamA domain in the interval Leu43–Trp112.

It belongs to the ArnE family. As to quaternary structure, heterodimer of ArnE and ArnF.

It localises to the cell inner membrane. It functions in the pathway bacterial outer membrane biogenesis; lipopolysaccharide biosynthesis. Translocates 4-amino-4-deoxy-L-arabinose-phosphoundecaprenol (alpha-L-Ara4N-phosphoundecaprenol) from the cytoplasmic to the periplasmic side of the inner membrane. The polypeptide is Probable 4-amino-4-deoxy-L-arabinose-phosphoundecaprenol flippase subunit ArnE (Yersinia pestis bv. Antiqua (strain Antiqua)).